An 87-amino-acid chain; its full sequence is Toxin CsEv3 (87 aa).

The first 19 residues, 1 to 19 (MNSLLMITACLFLIGTVWA), serve as a signal peptide directing secretion. Positions 20-85 (KEGYLVNKST…TYPLPNKSCG (66 aa)) constitute an LCN-type CS-alpha/beta domain. 4 disulfide bridges follow: Cys-31/Cys-84, Cys-35/Cys-60, Cys-44/Cys-65, and Cys-48/Cys-67. The residue at position 84 (Cys-84) is a Cysteine amide.

Belongs to the long (4 C-C) scorpion toxin superfamily. Sodium channel inhibitor family. Beta subfamily. Expressed by the venom gland.

It localises to the secreted. In terms of biological role, beta toxins bind voltage-independently at site-4 of sodium channels (Nav) and shift the voltage of activation toward more negative potentials thereby affecting sodium channel activation and promoting spontaneous and repetitive firing. Induces immediate paralysis in crickets after injection, with a total paralysis occurring within 15-30 minutes and lasting for 1-2 hours. Is also lethal to vertebrate (chicks) when injected in very high dosages (more that 100 mg/kg). The chain is Toxin CsEv3 from Centruroides sculpturatus (Arizona bark scorpion).